A 121-amino-acid chain; its full sequence is Large ribosomal subunit protein uL18 (121 aa).

It belongs to the universal ribosomal protein uL18 family. In terms of assembly, part of the 50S ribosomal subunit; part of the 5S rRNA/L5/L18/L25 subcomplex. Contacts the 5S and 23S rRNAs.

Functionally, this is one of the proteins that bind and probably mediate the attachment of the 5S RNA into the large ribosomal subunit, where it forms part of the central protuberance. The chain is Large ribosomal subunit protein uL18 from Ureaplasma parvum serovar 3 (strain ATCC 27815 / 27 / NCTC 11736).